A 443-amino-acid chain; its full sequence is Phosphoglucosamine mutase (443 aa).

Serine 101 acts as the Phosphoserine intermediate in catalysis. Residues serine 101, aspartate 239, aspartate 241, and aspartate 243 each contribute to the Mg(2+) site. Serine 101 is subject to Phosphoserine.

This sequence belongs to the phosphohexose mutase family. Mg(2+) is required as a cofactor. In terms of processing, activated by phosphorylation.

It catalyses the reaction alpha-D-glucosamine 1-phosphate = D-glucosamine 6-phosphate. Catalyzes the conversion of glucosamine-6-phosphate to glucosamine-1-phosphate. This is Phosphoglucosamine mutase from Francisella tularensis subsp. tularensis (strain FSC 198).